Consider the following 530-residue polypeptide: Chaperone Ric-8A (530 aa).

The residue at position 435 (S435) is a Phosphoserine. 2 positions are modified to phosphothreonine: T440 and T442. Phosphoserine is present on residues S501, S522, S523, and S527.

Belongs to the synembryn family. In terms of assembly, interacts with GDP-bound G alpha proteins GNAI1, GNAO1 and GNAQ, and with GNA13 with lower affinity. Does not interact with G-alpha proteins when they are in complex with subunits beta and gamma. Interacts (via C-terminus) with RGS14; the interaction stimulates the dissociation of the complex between RGS14 and the active GTP-bound form of GNAI1. Interacts with NCS1; interaction is favored in the absence of Ca(2+) and myristoylation of NCS1 is not required. Phosphorylated at Ser-435 and Thr-440 by CK2, stabilizing its interface with G alpha proteins.

The protein localises to the cytoplasm. It is found in the cell cortex. In terms of biological role, chaperone that specifically binds and folds nascent G alpha proteins prior to G protein heterotrimer formation, promoting their stability and activity: folds GNAI1, GNAO1, GNA13 and GNAQ. Does not fold G(s) G-alpha proteins GNAS nor GNAL. Also acts as a guanine nucleotide exchange factor (GEF) for G alpha proteins by stimulating exchange of bound GDP for free GTP. Involved in regulation of microtubule pulling forces during mitotic movement of chromosomes by stimulating G(i)-alpha protein (GNAI1), possibly leading to release G(i)-alpha-GTP and NuMA proteins from the NuMA-GPSM2-G(i)-alpha-GDP complex. Also acts as an activator for G(q)-alpha (GNAQ) protein by enhancing the G(q)-coupled receptor-mediated ERK activation. In Macaca fascicularis (Crab-eating macaque), this protein is Chaperone Ric-8A (RIC8A).